Here is a 105-residue protein sequence, read N- to C-terminus: Guanidinium exporter (105 aa).

Residues Met-1–Lys-21 traverse the membrane as a helical segment. Over Tyr-22 to Arg-28 the chain is Cytoplasmic. Residues Leu-29–Ala-49 traverse the membrane as a helical segment. The Periplasmic portion of the chain corresponds to Met-50–Thr-57. A helical transmembrane segment spans residues Ala-58–Leu-78. Residues Gly-79–Ser-81 are Cytoplasmic-facing. A helical transmembrane segment spans residues Ala-82–Leu-102. Over Ser-103–His-105 the chain is Periplasmic.

It belongs to the drug/metabolite transporter (DMT) superfamily. Small multidrug resistance (SMR) (TC 2.A.7.1) family. Gdx/SugE subfamily.

It is found in the cell inner membrane. Functionally, guanidinium ion exporter. Couples guanidinium export to the proton motive force, exchanging one guanidinium ion for two protons. The sequence is that of Guanidinium exporter from Escherichia coli O157:H7.